We begin with the raw amino-acid sequence, 167 residues long: Ribosome maturation factor RimM (167 aa).

Residues 94–166 form the PRC barrel domain; it reads DDRAWLHELE…YIHVPRFDEF (73 aa).

The protein belongs to the RimM family. Binds ribosomal protein uS19.

The protein localises to the cytoplasm. An accessory protein needed during the final step in the assembly of 30S ribosomal subunit, possibly for assembly of the head region. Essential for efficient processing of 16S rRNA. May be needed both before and after RbfA during the maturation of 16S rRNA. It has affinity for free ribosomal 30S subunits but not for 70S ribosomes. This chain is Ribosome maturation factor RimM, found in Chlorobium luteolum (strain DSM 273 / BCRC 81028 / 2530) (Pelodictyon luteolum).